The chain runs to 256 residues: Imidazole glycerol phosphate synthase subunit HisF (256 aa).

Active-site residues include Asp11 and Asp130.

This sequence belongs to the HisA/HisF family. Heterodimer of HisH and HisF.

It is found in the cytoplasm. It carries out the reaction 5-[(5-phospho-1-deoxy-D-ribulos-1-ylimino)methylamino]-1-(5-phospho-beta-D-ribosyl)imidazole-4-carboxamide + L-glutamine = D-erythro-1-(imidazol-4-yl)glycerol 3-phosphate + 5-amino-1-(5-phospho-beta-D-ribosyl)imidazole-4-carboxamide + L-glutamate + H(+). Its pathway is amino-acid biosynthesis; L-histidine biosynthesis; L-histidine from 5-phospho-alpha-D-ribose 1-diphosphate: step 5/9. Functionally, IGPS catalyzes the conversion of PRFAR and glutamine to IGP, AICAR and glutamate. The HisF subunit catalyzes the cyclization activity that produces IGP and AICAR from PRFAR using the ammonia provided by the HisH subunit. The polypeptide is Imidazole glycerol phosphate synthase subunit HisF (Methylocella silvestris (strain DSM 15510 / CIP 108128 / LMG 27833 / NCIMB 13906 / BL2)).